Consider the following 754-residue polypeptide: Elongation factor G-1, mitochondrial (754 aa).

The transit peptide at 1–17 (MARFPTSPAPNRLLRLF) directs the protein to the mitochondrion. The region spanning 63-340 (DKLRNIGISA…GVVSFLPSPN (278 aa)) is the tr-type G domain. GTP contacts are provided by residues 72–79 (AHIDSGKT), 139–143 (DTPGH), and 193–196 (NKLD).

This sequence belongs to the TRAFAC class translation factor GTPase superfamily. Classic translation factor GTPase family. EF-G/EF-2 subfamily. As to expression, expressed in cotyledons and adult leaves at the same levels.

Its subcellular location is the mitochondrion. It participates in protein biosynthesis; polypeptide chain elongation. Mitochondrial GTPase that catalyzes the GTP-dependent ribosomal translocation step during translation elongation. During this step, the ribosome changes from the pre-translocational (PRE) to the post-translocational (POST) state as the newly formed A-site-bound peptidyl-tRNA and P-site-bound deacylated tRNA move to the P and E sites, respectively. Catalyzes the coordinated movement of the two tRNA molecules, the mRNA and conformational changes in the ribosome. The sequence is that of Elongation factor G-1, mitochondrial (MEFG1) from Arabidopsis thaliana (Mouse-ear cress).